A 56-amino-acid chain; its full sequence is MKVSLTLLATLCASLASAGVVITPVHQDQVVPAAQKVAGDCFFGVVTPQGCAPLRT.

The first 18 residues, 1–18, serve as a signal peptide directing secretion; sequence MKVSLTLLATLCASLASA.

It belongs to the MC69 virulence factor family. Homodimer; disulfide-linked. Dimerization can possibly extend to multimerisation.

Its subcellular location is the secreted. In terms of biological role, secreted protein required for appressorial penetration of intact host epidermal cells and for pathogenicit, but not for subsequent biotrophic and necrotrophic colonization of leaves. The protein is Secreted virulence factor CLU5a of Colletotrichum graminicola (strain M1.001 / M2 / FGSC 10212) (Maize anthracnose fungus).